Reading from the N-terminus, the 200-residue chain is NADH-quinone oxidoreductase subunit B (200 aa).

Cys78, Cys79, Cys144, and Cys174 together coordinate [4Fe-4S] cluster.

The protein belongs to the complex I 20 kDa subunit family. In terms of assembly, NDH-1 is composed of 14 different subunits. Subunits NuoB, C, D, E, F, and G constitute the peripheral sector of the complex. It depends on [4Fe-4S] cluster as a cofactor.

It localises to the cell membrane. The enzyme catalyses a quinone + NADH + 5 H(+)(in) = a quinol + NAD(+) + 4 H(+)(out). Functionally, NDH-1 shuttles electrons from NADH, via FMN and iron-sulfur (Fe-S) centers, to quinones in the respiratory chain. The immediate electron acceptor for the enzyme in this species is believed to be ubiquinone. Couples the redox reaction to proton translocation (for every two electrons transferred, four hydrogen ions are translocated across the cytoplasmic membrane), and thus conserves the redox energy in a proton gradient. The protein is NADH-quinone oxidoreductase subunit B of Dehalococcoides mccartyi (strain ATCC BAA-2100 / JCM 16839 / KCTC 5957 / BAV1).